The sequence spans 262 residues: tRNA 4-demethylwyosine(37)-methyltransferase Taw21 (262 aa).

S-adenosyl-L-methionine is bound by residues histidine 108, phenylalanine 125, 148–149 (DL), and 175–176 (DA).

The protein belongs to the class I-like SAM-binding methyltransferase superfamily. TRM5/TYW2 family.

The protein resides in the cytoplasm. The catalysed reaction is 4-demethylwyosine(37) in tRNA(Phe) + S-adenosyl-L-methionine = isowyosine(37) in tRNA(Phe) + S-adenosyl-L-homocysteine + H(+). Catalyzes the C7-methylation of 4-demethylwyosine (imG-14) at position 37 in tRNA(Phe). This is tRNA 4-demethylwyosine(37)-methyltransferase Taw21 from Saccharolobus solfataricus (strain ATCC 35092 / DSM 1617 / JCM 11322 / P2) (Sulfolobus solfataricus).